The chain runs to 280 residues: UPF0494 membrane protein SPAC212.01c (280 aa).

Transmembrane regions (helical) follow at residues 107-127 (WPLLIIWSIIIVFAVDKKFEV), 144-164 (IWVPIAIYVCLLVLMLLSLIF), 178-198 (VIIAVLGAVLGMIIAVLGMII), and 199-219 (AALGMIIAALGATITGLLYFG).

It belongs to the UPF0494 family.

The protein resides in the membrane. This chain is UPF0494 membrane protein SPAC212.01c, found in Schizosaccharomyces pombe (strain 972 / ATCC 24843) (Fission yeast).